Here is a 132-residue protein sequence, read N- to C-terminus: Large ribosomal subunit protein uL14 (132 aa).

Belongs to the universal ribosomal protein uL14 family. Part of the 50S ribosomal subunit. Forms a cluster with proteins L3 and L24e, part of which may contact the 16S rRNA in 2 intersubunit bridges.

Binds to 23S rRNA. Forms part of two intersubunit bridges in the 70S ribosome. The sequence is that of Large ribosomal subunit protein uL14 from Methanocella arvoryzae (strain DSM 22066 / NBRC 105507 / MRE50).